Here is a 294-residue protein sequence, read N- to C-terminus: Potassium-transporting ATPase subunit beta (294 aa).

Over 1-36 (MAALQEKKSCSQRMAEFRHYCWNPDTGQMLGRTPAR) the chain is Cytoplasmic. A helical; Signal-anchor for type II membrane protein transmembrane segment spans residues 37 to 57 (WVWISLYYAGFYVVMTGLFAL). Residues 58–294 (CIYVLMQTID…KVEFKLTIQK (237 aa)) lie on the Extracellular side of the membrane. N-linked (GlcNAc...) asparagine glycans are attached at residues N99, N103, N130, N146, and N161. C131 and C152 are oxidised to a cystine. An intrachain disulfide couples C162 to C178. N193 and N225 each carry an N-linked (GlcNAc...) asparagine glycan. The interval 194 to 294 (NTAPRVDCTF…KVEFKLTIQK (101 aa)) is immunoglobulin-like. The cysteines at positions 201 and 266 are disulfide-linked.

Belongs to the X(+)/potassium ATPases subunit beta family. As to quaternary structure, the ATPase pump is composed of two subunits: alpha (catalytic) and beta (regulatory). Interacts with alpha subunit ATP12A; this interaction is required for the formation of a functionally active pump and targeting at the plasma membrane. Interacts (via N-terminus) with alpha subunit ATP4A (via the P-domain). In terms of processing, N-glycosylation is necessary for assembly and functional expression of the pump at the plasma membrane. In terms of tissue distribution, expressed in parietal cells (at protein level).

The protein resides in the apical cell membrane. Its subcellular location is the cell membrane. The beta subunit of the gastric H(+)/K(+) ATPase pump which transports H(+) ions in exchange for K(+) ions across the apical membrane of parietal cells. Plays a structural and regulatory role in the assembly and membrane targeting of a functionally active pump. Within a transport cycle, the transfer of a H(+) ion across the membrane is coupled to ATP hydrolysis and is associated with a transient phosphorylation of the alpha subunit that shifts the pump conformation from inward-facing (E1) to outward-facing state (E2). Interacts with the phosphorylation domain of the alpha subunit and functions as a ratchet, stabilizing the lumenal-open E2 conformation and preventing the reverse reaction of the transport cycle. In Mus musculus (Mouse), this protein is Potassium-transporting ATPase subunit beta (Atp4b).